The primary structure comprises 322 residues: ATP-dependent 6-phosphofructokinase (322 aa).

ATP-binding positions include Gly-12, Arg-73–Phe-74, and Gly-103–Thr-106. Asp-104 contributes to the Mg(2+) binding site. A substrate-binding site is contributed by Thr-126–Asp-128. The Proton acceptor role is filled by Asp-128. Arg-155 contributes to the ADP binding site. Substrate-binding positions include Arg-163 and Met-170–Arg-172. ADP-binding positions include Gly-186 to Glu-188, Lys-212, and Lys-214 to Ser-216. Residues Glu-223, Arg-245, and His-251–Arg-254 each bind substrate.

This sequence belongs to the phosphofructokinase type A (PFKA) family. ATP-dependent PFK group I subfamily. Prokaryotic clade 'B1' sub-subfamily. Homotetramer. Mg(2+) is required as a cofactor.

It localises to the cytoplasm. It catalyses the reaction beta-D-fructose 6-phosphate + ATP = beta-D-fructose 1,6-bisphosphate + ADP + H(+). The protein operates within carbohydrate degradation; glycolysis; D-glyceraldehyde 3-phosphate and glycerone phosphate from D-glucose: step 3/4. Allosterically activated by ADP and other diphosphonucleosides, and allosterically inhibited by phosphoenolpyruvate. Functionally, catalyzes the phosphorylation of D-fructose 6-phosphate to fructose 1,6-bisphosphate by ATP, the first committing step of glycolysis. The sequence is that of ATP-dependent 6-phosphofructokinase from Mesomycoplasma hyopneumoniae (strain 232) (Mycoplasma hyopneumoniae).